The following is a 493-amino-acid chain: Non-cyanogenic beta-glucosidase (493 aa).

Positions M1 to I18 are cleaved as a signal peptide. N34 carries an N-linked (GlcNAc...) asparagine glycan. A beta-D-glucoside contacts are provided by residues Q54, H158, and N203–E204. E204 serves as the catalytic Proton donor. The N-linked (GlcNAc...) asparagine glycan is linked to N335. Y346 contributes to the a beta-D-glucoside binding site. N371 and N412 each carry an N-linked (GlcNAc...) asparagine glycan. A beta-D-glucoside is bound by residues E422, W471, E478–W479, and F487. Residue E422 is the Nucleophile of the active site.

It belongs to the glycosyl hydrolase 1 family. Leaves.

The catalysed reaction is Hydrolysis of terminal, non-reducing beta-D-glucosyl residues with release of beta-D-glucose.. This is Non-cyanogenic beta-glucosidase from Trifolium repens (Creeping white clover).